The primary structure comprises 150 residues: Small ribosomal subunit protein uS13 (150 aa).

Positions 131-150 (QRTKSTFRRGPTVGVSRRKK) are disordered.

This sequence belongs to the universal ribosomal protein uS13 family. In terms of assembly, part of the 30S ribosomal subunit. Forms a loose heterodimer with protein S19. Forms two bridges to the 50S subunit in the 70S ribosome.

Its function is as follows. Located at the top of the head of the 30S subunit, it contacts several helices of the 16S rRNA. In the 70S ribosome it contacts the 23S rRNA (bridge B1a) and protein L5 of the 50S subunit (bridge B1b), connecting the 2 subunits; these bridges are implicated in subunit movement. This Methanocaldococcus jannaschii (strain ATCC 43067 / DSM 2661 / JAL-1 / JCM 10045 / NBRC 100440) (Methanococcus jannaschii) protein is Small ribosomal subunit protein uS13.